Reading from the N-terminus, the 127-residue chain is Fumarate reductase subunit C (127 aa).

3 helical membrane-spanning segments follow: residues 30 to 50 (ATVL…GSLV), 67 to 87 (IVVA…QTFF), and 107 to 127 (IIVL…LIVM).

This sequence belongs to the FrdC family. As to quaternary structure, part of an enzyme complex containing four subunits: a flavoprotein (FrdA), an iron-sulfur protein (FrdB), and two hydrophobic anchor proteins (FrdC and FrdD).

The protein resides in the cell inner membrane. Anchors the catalytic components of the fumarate reductase complex to the cell membrane, binds quinones. The protein is Fumarate reductase subunit C of Vibrio campbellii (strain ATCC BAA-1116).